We begin with the raw amino-acid sequence, 204 residues long: Proteasome subunit beta type-3 (204 aa).

This sequence belongs to the peptidase T1B family. As to quaternary structure, the 26S proteasome consists of a 20S proteasome core and two 19S regulatory subunits. The 20S proteasome core is composed of 28 subunits that are arranged in four stacked rings, resulting in a barrel-shaped structure. The two end rings are each formed by seven alpha subunits, and the two central rings are each formed by seven beta subunits. The catalytic chamber with the active sites is on the inside of the barrel.

The protein localises to the cytoplasm. The protein resides in the nucleus. Its function is as follows. Non-catalytic component of the proteasome, a multicatalytic proteinase complex which is characterized by its ability to cleave peptides with Arg, Phe, Tyr, Leu, and Glu adjacent to the leaving group at neutral or slightly basic pH. The proteasome has an ATP-dependent proteolytic activity. This chain is Proteasome subunit beta type-3 (PBC1), found in Picea mariana (Black spruce).